Consider the following 393-residue polypeptide: Alpha-1,2 mannosyltransferase KTR1 (393 aa).

At Met1–Lys16 the chain is on the cytoplasmic side. The helical; Signal-anchor for type II membrane protein transmembrane segment at Leu17–Ala34 threads the bilayer. A stem region region spans residues Gln35–Gly68. Residues Gln35–Gly393 lie on the Lumenal side of the membrane. A catalytic region spans residues Pro69–Gly393. A glycan (N-linked (GlcNAc...) asparagine) is linked at Asn120. Glu280 functions as the Nucleophile in the catalytic mechanism.

This sequence belongs to the glycosyltransferase 15 family. Requires Mn(2+) as cofactor. N-glycosylated.

The protein localises to the golgi apparatus membrane. The protein operates within protein modification; protein glycosylation. In terms of biological role, mannosyltransferase that transfers a mannose residue from GDP-mannose to a range of acceptors in vitro, forming an alpha-(1-&gt;2)-D-mannosyl-D-mannose linkage. This chain is Alpha-1,2 mannosyltransferase KTR1 (KTR1), found in Saccharomyces cerevisiae (strain ATCC 204508 / S288c) (Baker's yeast).